The primary structure comprises 128 residues: Ribonuclease P protein component (128 aa).

Belongs to the RnpA family. Consists of a catalytic RNA component (M1 or rnpB) and a protein subunit.

It catalyses the reaction Endonucleolytic cleavage of RNA, removing 5'-extranucleotides from tRNA precursor.. In terms of biological role, RNaseP catalyzes the removal of the 5'-leader sequence from pre-tRNA to produce the mature 5'-terminus. It can also cleave other RNA substrates such as 4.5S RNA. The protein component plays an auxiliary but essential role in vivo by binding to the 5'-leader sequence and broadening the substrate specificity of the ribozyme. This Methylococcus capsulatus (strain ATCC 33009 / NCIMB 11132 / Bath) protein is Ribonuclease P protein component.